We begin with the raw amino-acid sequence, 502 residues long: ATP synthase subunit alpha (502 aa).

ATP is bound at residue 169–176 (GDRQTGKT).

This sequence belongs to the ATPase alpha/beta chains family. As to quaternary structure, F-type ATPases have 2 components, CF(1) - the catalytic core - and CF(0) - the membrane proton channel. CF(1) has five subunits: alpha(3), beta(3), gamma(1), delta(1), epsilon(1). CF(0) has three main subunits: a(1), b(2) and c(9-12). The alpha and beta chains form an alternating ring which encloses part of the gamma chain. CF(1) is attached to CF(0) by a central stalk formed by the gamma and epsilon chains, while a peripheral stalk is formed by the delta and b chains.

It localises to the cell inner membrane. The enzyme catalyses ATP + H2O + 4 H(+)(in) = ADP + phosphate + 5 H(+)(out). Produces ATP from ADP in the presence of a proton gradient across the membrane. The alpha chain is a regulatory subunit. The polypeptide is ATP synthase subunit alpha (Solidesulfovibrio magneticus (strain ATCC 700980 / DSM 13731 / RS-1) (Desulfovibrio magneticus)).